Reading from the N-terminus, the 132-residue chain is DNA-binding protein inhibitor ID-2 (132 aa).

One can recognise a bHLH domain in the interval 23 to 75; sequence ARSKTPVDDPMSLLYNMNDCYSKLKELVPSIPQNKKVSKMEILQHVIDYILDL. The short motif at 105–114 is the Nuclear export signal element; that stretch reads LNTDISILSL.

In terms of assembly, heterodimer with other HLH proteins.

The protein resides in the cytoplasm. It is found in the nucleus. Transcriptional regulator (lacking a basic DNA binding domain) which negatively regulates the basic helix-loop-helix (bHLH) transcription factors by forming heterodimers and inhibiting their DNA binding and transcriptional activity. Inhibits the activity of both neurogenic (neurod1/neuroD) and myogenic (myod1/myoD) bHLH factors. May play a role in the regulation of the circadian clock. The sequence is that of DNA-binding protein inhibitor ID-2 from Xenopus tropicalis (Western clawed frog).